Reading from the N-terminus, the 346-residue chain is Uroporphyrinogen decarboxylase (346 aa).

Substrate contacts are provided by residues 23–27 (RQAGR), D72, Y155, S209, and H322.

The protein belongs to the uroporphyrinogen decarboxylase family. In terms of assembly, homodimer.

It localises to the cytoplasm. The catalysed reaction is uroporphyrinogen III + 4 H(+) = coproporphyrinogen III + 4 CO2. It functions in the pathway porphyrin-containing compound metabolism; protoporphyrin-IX biosynthesis; coproporphyrinogen-III from 5-aminolevulinate: step 4/4. Functionally, catalyzes the decarboxylation of four acetate groups of uroporphyrinogen-III to yield coproporphyrinogen-III. This chain is Uroporphyrinogen decarboxylase, found in Anaeromyxobacter sp. (strain Fw109-5).